The chain runs to 465 residues: MGDSDNAIPFSRKRTALKELSRDNPGLDDDDEDTSALESGTFNTASKEVLASRRIIRVRRTDRSATAPPASNPFTGIRLVPFTAPAPSTAAAETTKPLSAGKQETLADGRSDATKETDGDSKEKSDAIDAVGKQETQGDEISAKTKDIIDGGEKEMSEAVNSVEGGGAVNKNEDEIKTTMVTEVAAGEETVKDDNNNSNTVEGSDCVVKDTGGNQTEKEGKEGDGNEDTEKNGDSGALSSFHQHSSSKNAFTGLASTGFSASSFSFGLVPQEGSTGSGSEQSSFSFGQANNGNSSLFGASVATSITTKSTETTTAFPSKQDVSVETGEENEKAAFTADSVMFEYLEGGWKERGKGELKVNISTTENRKARLVMRSKGNYRLTLNASLYPEMKLAKMDKKGITFACVNSVSDAKDGLSTLALKFKDPTVVEEFRAVIEEHKDSKPSVAEAAAPLKTPENSPSAEDA.

Disordered stretches follow at residues 1–44 (MGDS…TFNT) and 59–244 (RRTD…FHQH). Gly2 carries the post-translational modification N-acetylglycine. Acidic residues predominate over residues 26-35 (GLDDDDEDTS). A compositionally biased stretch (low complexity) spans 81 to 97 (PFTAPAPSTAAAETTKP). Composition is skewed to basic and acidic residues over residues 105-127 (TLAD…KSDA), 141-157 (ISAK…KEMS), and 216-233 (TEKE…EKNG). Ser125 carries the phosphoserine modification. A run of 3 repeats spans residues 266-267 (FG), 286-287 (FG), and 297-298 (FG). The interval 266–298 (FGLVPQEGSTGSGSEQSSFSFGQANNGNSSLFG) is 3 X 2 AA repeats of F-G. Disordered stretches follow at residues 308–330 (KSTE…GEEN) and 439–465 (HKDS…AEDA). At Thr455 the chain carries Phosphothreonine. The segment covering 456–465 (PENSPSAEDA) has biased composition (polar residues). Residue Ser459 is modified to Phosphoserine.

In terms of assembly, part of the nuclear pore complex (NPC). The NPC has an eight-fold symmetrical structure comprising a central transport channel and two rings, the cytoplasmic and nuclear rings, to which eight filaments are attached. The cytoplasmic filaments have loose ends, while the nuclear filaments are joined in a distal ring, forming a nuclear basket. NPCs are highly dynamic in configuration and composition, and can be devided in 3 subcomplexes, the NUP62 subcomplex, the NUP107-160 subcomplex and the NUP93 subcomplex, containing approximately 30 different nucleoporin proteins.

The protein localises to the nucleus. It localises to the nucleoplasm. Its subcellular location is the nuclear pore complex. In terms of biological role, probably involved in nucleocytoplasmic transport via its interactions with importins and Ran, rather than by forming part of the nuclear pore complex (NPC) scaffolding. The chain is Nuclear pore complex protein NUP50B from Arabidopsis thaliana (Mouse-ear cress).